Here is a 500-residue protein sequence, read N- to C-terminus: Glutamate--tRNA ligase (500 aa).

A 'HIGH' region motif is present at residues 13-23; sequence PSPTGTPHVGM. Positions 258–262 match the 'KMSKS' region motif; that stretch reads KLSKR. K261 serves as a coordination point for ATP.

This sequence belongs to the class-I aminoacyl-tRNA synthetase family. Glutamate--tRNA ligase type 1 subfamily. As to quaternary structure, monomer.

It localises to the cytoplasm. The enzyme catalyses tRNA(Glu) + L-glutamate + ATP = L-glutamyl-tRNA(Glu) + AMP + diphosphate. Its function is as follows. Catalyzes the attachment of glutamate to tRNA(Glu) in a two-step reaction: glutamate is first activated by ATP to form Glu-AMP and then transferred to the acceptor end of tRNA(Glu). This chain is Glutamate--tRNA ligase, found in Corynebacterium jeikeium (strain K411).